The primary structure comprises 46 residues: KSCCPSTTARNIYNTCRLTGASRSVCASLSGCKIISGSTCDSGWNH.

3 cysteine pairs are disulfide-bonded: C3-C40, C4-C32, and C16-C26.

The protein belongs to the plant thionin (TC 1.C.44) family.

It localises to the secreted. In terms of biological role, thionins are small plant proteins which are toxic to animal cells. They seem to exert their toxic effect at the level of the cell membrane. Their precise function is not known. The polypeptide is Ligatoxin-B (Phoradendron liga (Argentine mistletoe)).